Consider the following 594-residue polypeptide: F-box/LRR-repeat protein At3g58980 (594 aa).

The region spanning 1–49 (MDRISNLPNEIICHIVSFLSAKEAAFASILSKRWRNLFTIVIKLQFDDS) is the F-box domain. LRR repeat units lie at residues 103 to 125 (ILDL…VFTC), 128 to 151 (LVKL…DAFL), 152 to 174 (PALE…AFEK), 203 to 218 (SPTL…DLYE), 219 to 242 (CEFT…AVPD), 249 to 272 (LDSL…GYVD), 288 to 314 (LRNV…AIPV), 315 to 339 (FKNL…FLPF), 344 to 369 (CPNL…VCHC), 403 to 414 (LEKLSGLKLVKL), 415 to 437 (HSLT…SSKC), 450 to 474 (LPSL…AFQK), 503 to 518 (SQTL…YWAE), 519 to 541 (HNLE…AHVP), and 584 to 594 (LRNVEILRLWM).

The polypeptide is F-box/LRR-repeat protein At3g58980 (Arabidopsis thaliana (Mouse-ear cress)).